The chain runs to 269 residues: MVLSDSLKLPSPTLSAAAGVDDCDGEDHPTCQNCFTVKTPLWRRDEHGTVLCNACGLFLKLHGEPRPISLKTDTIKSRNRKKLNNNNVNTNANTHSNDPNKIFKRKKRLLTTGGGSLPTNNPKVSILEKFMVSGSIKPLLKPKETVPNTKECSTQRGKFSLDPCEPSGKNYLYQINGSDIYTSNIELTRLPNLSTLLEPSPFSDSAVPEIELTWKLHNEEEVIKLKTKISELELVTDLYKKHIFQLNEKCKQLEVELHSRASVQSHPQH.

The GATA-type zinc finger occupies 31–55 (CQNCFTVKTPLWRRDEHGTVLCNAC).

The protein resides in the nucleus. Its function is as follows. Negative regulator of multiple nitrogen catabolic genes including the allantoin pathway genes. The polypeptide is Nitrogen regulatory protein DAL80 (DAL80) (Saccharomyces cerevisiae (strain ATCC 204508 / S288c) (Baker's yeast)).